We begin with the raw amino-acid sequence, 784 residues long: LPS-assembly protein LptD (784 aa).

The first 24 residues, 1–24 (MKKRIPTLLATMIASALYSHQGLA), serve as a signal peptide directing secretion. Disulfide bonds link C31–C724 and C173–C725.

The protein belongs to the LptD family. As to quaternary structure, component of the lipopolysaccharide transport and assembly complex. Interacts with LptE and LptA. In terms of processing, contains two intramolecular disulfide bonds.

The protein localises to the cell outer membrane. Together with LptE, is involved in the assembly of lipopolysaccharide (LPS) at the surface of the outer membrane. This chain is LPS-assembly protein LptD, found in Salmonella paratyphi A (strain ATCC 9150 / SARB42).